A 441-amino-acid polypeptide reads, in one-letter code: Homoserine dehydrogenase (441 aa).

NADP(+)-binding residues include asparagine 17 and valine 18. Residues valine 18 and glycine 47 each contribute to the NAD(+) site. Valine 18 provides a ligand contact to NADPH. NADP(+) contacts are provided by arginine 49, arginine 50, and lysine 107. Residue arginine 49 coordinates NADPH. Lysine 107 serves as a coordination point for NADPH. Na(+) is bound by residues glutamate 131, valine 134, glycine 136, and isoleucine 138. NADP(+) contacts are provided by glycine 189 and glutamate 192. Residues glutamate 192 and aspartate 203 each contribute to the L-homoserine site. Lysine 207 acts as the Proton donor in catalysis. Glycine 309 provides a ligand contact to NADP(+). Glycine 309 is an NAD(+) binding site. Glycine 309 is a binding site for NADPH. The ACT domain maps to 356 to 435 (YVSMNVADKP…VVQGVTSVLR (80 aa)).

This sequence belongs to the homoserine dehydrogenase family. It depends on a metal cation as a cofactor.

It catalyses the reaction L-homoserine + NADP(+) = L-aspartate 4-semialdehyde + NADPH + H(+). The enzyme catalyses L-homoserine + NAD(+) = L-aspartate 4-semialdehyde + NADH + H(+). The protein operates within amino-acid biosynthesis; L-methionine biosynthesis via de novo pathway; L-homoserine from L-aspartate: step 3/3. It participates in amino-acid biosynthesis; L-threonine biosynthesis; L-threonine from L-aspartate: step 3/5. In terms of biological role, catalyzes the conversion of L-aspartate-beta-semialdehyde (L-Asa) to L-homoserine (L-Hse), the third step in the biosynthesis of threonine and methionine from aspartate. The polypeptide is Homoserine dehydrogenase (hom) (Mycobacterium leprae (strain TN)).